Reading from the N-terminus, the 409-residue chain is uncharacterized protein (409 aa).

The next 10 membrane-spanning stretches (helical) occupy residues 18–38, 47–67, 100–120, 159–179, 180–200, 232–252, 260–280, 302–322, 355–375, and 380–400; these read ALSA…ADVV, GPLL…TGVG, VVTV…ALVI, VGAM…GNAY, APAL…LLWL, FWLY…FGLL, GVLA…ADAL, ILSI…VVIG, GVFA…IGWL, and IGTL…MMFA.

The protein localises to the cell membrane. This is an uncharacterized protein from Mycobacterium tuberculosis (strain CDC 1551 / Oshkosh).